A 608-amino-acid polypeptide reads, in one-letter code: 2',5'-phosphodiesterase 12 (608 aa).

A mitochondrion-targeting transit peptide spans 1–16 (MWRLPGRAALRGVRSV). Residues 91-111 (AKKSRKNRAHSSGGAACAATG) are disordered. The segment covering 100–111 (HSSGGAACAATG) has biased composition (low complexity). The residue at position 216 (Ser-216) is a Phosphoserine. The Mg(2+) site is built by Glu-350, Asp-495, and Asn-497. The active-site Proton donor/acceptor is Asp-495.

Belongs to the CCR4/nocturin family. The cofactor is Mg(2+).

The protein resides in the mitochondrion matrix. It catalyses the reaction Exonucleolytic cleavage of poly(A) to 5'-AMP.. Functionally, enzyme that cleaves 2',5'-phosphodiester bond linking adenosines of the 5'-triphosphorylated oligoadenylates, triphosphorylated oligoadenylates referred as 2-5A modulates the 2-5A system. Degrades triphosphorylated 2-5A to produce AMP and ATP. Also cleaves 3',5'-phosphodiester bond of oligoadenylates. Plays a role as a negative regulator of the 2-5A system that is one of the major pathways for antiviral and antitumor functions induced by interferons (IFNs). Suppression of this enzyme increases cellular 2-5A levels and decreases viral replication in cultured small-airway epithelial cells. This chain is 2',5'-phosphodiesterase 12 (Pde12), found in Rattus norvegicus (Rat).